The following is an 89-amino-acid chain: Putative regulatory protein CLH_1161 (89 aa).

This sequence belongs to the RemA family.

The sequence is that of Putative regulatory protein CLH_1161 from Clostridium botulinum (strain Alaska E43 / Type E3).